Reading from the N-terminus, the 178-residue chain is CASP-like protein 2A2 (178 aa).

Residues 1–22 lie on the Cytoplasmic side of the membrane; the sequence is MDKTDQTAIDGSALELNRTEKT. A helical transmembrane segment spans residues 23–43; sequence VEAVLRVASMALSITGLVIMI. Over 44-69 the chain is Extracellular; the sequence is KNSISNDFGSLSYSNLGAFMYLVGAN. A helical transmembrane segment spans residues 70 to 90; the sequence is GVCAAYSLLSALAILALPCPI. Topologically, residues 91-96 are cytoplasmic; that stretch reads SKVQVR. The chain crosses the membrane as a helical span at residues 97 to 117; the sequence is TLFLLDQVVTYVVLAAGAVSA. Over 118-145 the chain is Extracellular; the sequence is ETVYLAYYGNIPITWSSACDSYGIFCHK. Residues 146 to 166 form a helical membrane-spanning segment; that stretch reads ALISVVFTFVVSLLYMLLSLI. Over 167–178 the chain is Cytoplasmic; that stretch reads SSYRLFSRFEAP.

It belongs to the Casparian strip membrane proteins (CASP) family. As to quaternary structure, homodimer and heterodimers.

The protein resides in the cell membrane. This Arabidopsis lyrata subsp. lyrata (Lyre-leaved rock-cress) protein is CASP-like protein 2A2.